Here is a 1300-residue protein sequence, read N- to C-terminus: Serine protease EspP (1300 aa).

The first 55 residues, 1-55, serve as a signal peptide directing secretion; that stretch reads MNKIYSLKYSHITGGLIAVSELSGRVSSRATGKKKHKRILALCFLGLLQSSYSFA. The 255-residue stretch at 57–311 folds into the Peptidase S6 domain; the sequence is QMDISNFYIR…NQTTIDNLKN (255 aa). Catalysis depends on charge relay system residues histidine 127, aspartate 156, and serine 263. Residues 1034–1300 form the Autotransporter domain; the sequence is DINGEAGAWA…AVNANFRYSF (267 aa).

Cleaved to release the mature protein from the outer membrane.

It localises to the periplasm. It is found in the secreted. The protein localises to the cell surface. The protein resides in the cell outer membrane. Serine protease with cytotoxic effect. Disrupts actin cytoskeleton resulting cell detachment in vitro. The protein is Serine protease EspP (espP) of Escherichia coli.